The following is a 403-amino-acid chain: Phosphoglycerate kinase (403 aa).

Substrate is bound by residues Asp21–Asn23, Arg36, His59–Arg62, Arg119, and Arg159. Residues Lys214, Gly301, Glu332, and Gly359–Ser362 each bind ATP.

Belongs to the phosphoglycerate kinase family. In terms of assembly, monomer.

It is found in the cytoplasm. It carries out the reaction (2R)-3-phosphoglycerate + ATP = (2R)-3-phospho-glyceroyl phosphate + ADP. It functions in the pathway carbohydrate degradation; glycolysis; pyruvate from D-glyceraldehyde 3-phosphate: step 2/5. This is Phosphoglycerate kinase from Lactobacillus acidophilus (strain ATCC 700396 / NCK56 / N2 / NCFM).